A 293-amino-acid chain; its full sequence is 4-hydroxy-3-methylbut-2-enyl diphosphate reductase (293 aa).

Position 12 (cysteine 12) interacts with [4Fe-4S] cluster. 2 residues coordinate (2E)-4-hydroxy-3-methylbut-2-enyl diphosphate: histidine 40 and histidine 74. Positions 40 and 74 each coordinate dimethylallyl diphosphate. The isopentenyl diphosphate site is built by histidine 40 and histidine 74. Cysteine 96 lines the [4Fe-4S] cluster pocket. Histidine 128 provides a ligand contact to (2E)-4-hydroxy-3-methylbut-2-enyl diphosphate. Histidine 128 is a dimethylallyl diphosphate binding site. Residue histidine 128 coordinates isopentenyl diphosphate. Glutamate 130 acts as the Proton donor in catalysis. A (2E)-4-hydroxy-3-methylbut-2-enyl diphosphate-binding site is contributed by threonine 166. Position 202 (cysteine 202) interacts with [4Fe-4S] cluster. 4 residues coordinate (2E)-4-hydroxy-3-methylbut-2-enyl diphosphate: serine 230, serine 231, asparagine 232, and serine 274. 4 residues coordinate dimethylallyl diphosphate: serine 230, serine 231, asparagine 232, and serine 274. The isopentenyl diphosphate site is built by serine 230, serine 231, asparagine 232, and serine 274.

It belongs to the IspH family. It depends on [4Fe-4S] cluster as a cofactor.

It catalyses the reaction isopentenyl diphosphate + 2 oxidized [2Fe-2S]-[ferredoxin] + H2O = (2E)-4-hydroxy-3-methylbut-2-enyl diphosphate + 2 reduced [2Fe-2S]-[ferredoxin] + 2 H(+). The catalysed reaction is dimethylallyl diphosphate + 2 oxidized [2Fe-2S]-[ferredoxin] + H2O = (2E)-4-hydroxy-3-methylbut-2-enyl diphosphate + 2 reduced [2Fe-2S]-[ferredoxin] + 2 H(+). Its pathway is isoprenoid biosynthesis; dimethylallyl diphosphate biosynthesis; dimethylallyl diphosphate from (2E)-4-hydroxy-3-methylbutenyl diphosphate: step 1/1. It functions in the pathway isoprenoid biosynthesis; isopentenyl diphosphate biosynthesis via DXP pathway; isopentenyl diphosphate from 1-deoxy-D-xylulose 5-phosphate: step 6/6. Its function is as follows. Catalyzes the conversion of 1-hydroxy-2-methyl-2-(E)-butenyl 4-diphosphate (HMBPP) into a mixture of isopentenyl diphosphate (IPP) and dimethylallyl diphosphate (DMAPP). Acts in the terminal step of the DOXP/MEP pathway for isoprenoid precursor biosynthesis. The chain is 4-hydroxy-3-methylbut-2-enyl diphosphate reductase from Cytophaga hutchinsonii (strain ATCC 33406 / DSM 1761 / CIP 103989 / NBRC 15051 / NCIMB 9469 / D465).